A 325-amino-acid chain; its full sequence is Replication factor C small subunit (325 aa).

Residue 45-52 (GPPGTGKT) participates in ATP binding.

This sequence belongs to the activator 1 small subunits family. RfcS subfamily. As to quaternary structure, heteromultimer composed of small subunits (RfcS) and large subunits (RfcL).

Part of the RFC clamp loader complex which loads the PCNA sliding clamp onto DNA. This chain is Replication factor C small subunit, found in Sulfolobus acidocaldarius (strain ATCC 33909 / DSM 639 / JCM 8929 / NBRC 15157 / NCIMB 11770).